We begin with the raw amino-acid sequence, 844 residues long: DNA mismatch repair protein MutS (844 aa).

610 to 617 provides a ligand contact to ATP; sequence GPNMGGKS.

The protein belongs to the DNA mismatch repair MutS family.

Functionally, this protein is involved in the repair of mismatches in DNA. It is possible that it carries out the mismatch recognition step. This protein has a weak ATPase activity. This chain is DNA mismatch repair protein MutS, found in Francisella tularensis subsp. tularensis (strain WY96-3418).